Reading from the N-terminus, the 308-residue chain is SAP30-binding protein (308 aa).

A disordered region spans residues 15 to 101; that stretch reads AEYSDPESDG…EAEKRDPQEL (87 aa). Phosphoserine occurs at positions 18, 22, 43, and 52. Residues 57-78 are compositionally biased toward acidic residues; that stretch reads DEDGYEEEEDENSKQSEDDDSE. Residues 79 to 99 are compositionally biased toward basic and acidic residues; it reads TEKPEADDPKDNTEAEKRDPQ. Lys-95 participates in a covalent cross-link: Glycyl lysine isopeptide (Lys-Gly) (interchain with G-Cter in SUMO2). At Ser-113 the chain carries Phosphoserine. Residues Lys-220, Lys-304, and Lys-305 each participate in a glycyl lysine isopeptide (Lys-Gly) (interchain with G-Cter in SUMO2) cross-link.

The protein belongs to the HCNGP family. As to quaternary structure, interacts with histone deacetylase complex subunit SAP30.

The protein localises to the nucleus. In terms of biological role, plays a role in transcriptional repression by promoting histone deacetylase activity, leading to deacetylation of histone H3. May be involved in the regulation of beta-2-microglobulin genes. The protein is SAP30-binding protein (Sap30bp) of Mus musculus (Mouse).